The following is a 224-amino-acid chain: Fibronectin type III domain-containing protein 9 (224 aa).

The region spanning 1–101 (MNIEVGNISY…FHTLDKSPLA (101 aa)) is the Fibronectin type-III domain. Residues 113 to 133 (LWVLMAILLACFTAVLAFICL) form a helical membrane-spanning segment. The tract at residues 175-224 (LQGLPLVEMPRKNSRDGAELDPEANQDAPDAGALQRGGGDPPAILPHCGE) is disordered. Over residues 183–192 (MPRKNSRDGA) the composition is skewed to basic and acidic residues.

The protein localises to the membrane. The sequence is that of Fibronectin type III domain-containing protein 9 (FNDC9) from Homo sapiens (Human).